Here is a 1788-residue protein sequence, read N- to C-terminus: Glutamine and serine-rich protein 1 (1788 aa).

Residues 1–53 (MDAHYAPAGFAEPPAPPASAATQPAAPAWAYEARVPAAASSPSCSGSSPSLKA) show a composition bias toward low complexity. 3 disordered regions span residues 1–69 (MDAH…DVLQ), 472–498 (TRDLPSVSESQNYSSGQSQGLSPVSQT), and 532–617 (SYSS…SKQD). 4 stretches are compositionally biased toward polar residues: residues 60–69 (PSQSESDVLQ), 478–492 (VSESQNYSSGQSQGL), 532–569 (SYSSASRGQSLPVSTPTPSYTSMHPSPNAQTQGSSAQP), and 576–594 (VQSSFASSTRGQTLQSSIP). Phosphoserine is present on residues Ser670 and Ser940. The residue at position 1003 (Thr1003) is a Phosphothreonine. Ser1041 bears the Phosphoserine mark. 2 disordered regions span residues 1104–1163 (QPGD…TDVY) and 1234–1264 (IQTTRTFCPPPFAKTSPAAQAPSETGGVSLS). A Glycyl lysine isopeptide (Lys-Gly) (interchain with G-Cter in SUMO2) cross-link involves residue Lys1112. A compositionally biased stretch (basic and acidic residues) spans 1126 to 1136 (PKEKAKGKEQG). Lys1137 is covalently cross-linked (Glycyl lysine isopeptide (Lys-Gly) (interchain with G-Cter in SUMO2)). Ser1262, Ser1281, and Ser1282 each carry phosphoserine. A Phosphothreonine modification is found at Thr1394. Position 1401 is a phosphoserine (Ser1401). Positions 1494–1588 (VCSKKPRNKP…DEGFEPPAPS (95 aa)) are disordered. Residues 1510–1537 (IPSKPSSISKTSDPPVSKTTTTKTPSTK) show a composition bias toward low complexity. The segment covering 1545-1561 (IKAEPPPKKRKKWKEEF) has biased composition (basic and acidic residues). Residues 1562 to 1575 (SSSQSESSPEVRSS) are compositionally biased toward low complexity.

As to quaternary structure, interacts with TET1.

It localises to the chromosome. Plays an essential role in the protection and maintenance of transcriptional and developmental programs. Protects many bivalent promoters and poised enhancers from hypermethylation, showing a marked preference for these regulatory elements over other types of promoters or enhancers. Mechanistically, cooperates with TET1 and binds to DNA in a common complex to inhibit the binding of DNMT3A/3B and therefore de novo methylation. The polypeptide is Glutamine and serine-rich protein 1 (Mus musculus (Mouse)).